Here is a 411-residue protein sequence, read N- to C-terminus: 2,3-bisphosphoglycerate-independent phosphoglycerate mutase (411 aa).

This sequence belongs to the BPG-independent phosphoglycerate mutase family. A-PGAM subfamily.

It catalyses the reaction (2R)-2-phosphoglycerate = (2R)-3-phosphoglycerate. The protein operates within carbohydrate degradation; glycolysis; pyruvate from D-glyceraldehyde 3-phosphate: step 3/5. Functionally, catalyzes the interconversion of 2-phosphoglycerate and 3-phosphoglycerate. This chain is 2,3-bisphosphoglycerate-independent phosphoglycerate mutase, found in Pyrobaculum arsenaticum (strain DSM 13514 / JCM 11321 / PZ6).